The primary structure comprises 784 residues: Protein translocase subunit SecA 2 (784 aa).

Residues Gln-94, 112-116, and Asp-501 each bind ATP; that span reads GEGKT.

The protein belongs to the SecA family. In terms of assembly, monomer and homodimer. Part of the essential Sec protein translocation apparatus which comprises SecA, SecYEG and auxiliary proteins SecDF. Other proteins may also be involved.

The protein resides in the cell membrane. The protein localises to the cytoplasm. The catalysed reaction is ATP + H2O + cellular proteinSide 1 = ADP + phosphate + cellular proteinSide 2.. In terms of biological role, part of the Sec protein translocase complex. Interacts with the SecYEG preprotein conducting channel. Has a central role in coupling the hydrolysis of ATP to the transfer of proteins into and across the cell membrane, serving as an ATP-driven molecular motor driving the stepwise translocation of polypeptide chains across the membrane. This chain is Protein translocase subunit SecA 2, found in Mycolicibacterium smegmatis (strain ATCC 700084 / mc(2)155) (Mycobacterium smegmatis).